The following is a 673-amino-acid chain: UvrABC system protein B (673 aa).

The 158-residue stretch at 26–183 (EGLEDGLAHQ…RRLAELQYTR (158 aa)) folds into the Helicase ATP-binding domain. 39–46 (GVTGSGKT) contributes to the ATP binding site. The Beta-hairpin signature appears at 92–115 (YYDYYQPEAYVPSSDTFIEKDASV). The region spanning 431–597 (QVDDLLSEIR…GLNKKVVDIL (167 aa)) is the Helicase C-terminal domain. In terms of domain architecture, UVR spans 633–668 (QQKIHELEGQMMQHAQNLEFEEAAQIRDQLHQLREL).

The protein belongs to the UvrB family. In terms of assembly, forms a heterotetramer with UvrA during the search for lesions. Interacts with UvrC in an incision complex.

It is found in the cytoplasm. Functionally, the UvrABC repair system catalyzes the recognition and processing of DNA lesions. A damage recognition complex composed of 2 UvrA and 2 UvrB subunits scans DNA for abnormalities. Upon binding of the UvrA(2)B(2) complex to a putative damaged site, the DNA wraps around one UvrB monomer. DNA wrap is dependent on ATP binding by UvrB and probably causes local melting of the DNA helix, facilitating insertion of UvrB beta-hairpin between the DNA strands. Then UvrB probes one DNA strand for the presence of a lesion. If a lesion is found the UvrA subunits dissociate and the UvrB-DNA preincision complex is formed. This complex is subsequently bound by UvrC and the second UvrB is released. If no lesion is found, the DNA wraps around the other UvrB subunit that will check the other stand for damage. The chain is UvrABC system protein B from Salmonella heidelberg (strain SL476).